The primary structure comprises 582 residues: Glutamine--tRNA ligase (582 aa).

The short motif at 50–60 is the 'HIGH' region element; that stretch reads PEPNGYLHIGH. ATP-binding positions include 51–53 and 57–63; these read EPN and HIGHAKS. L-glutamine contacts are provided by Asp83 and Tyr235. Residues Thr254 and 289–290 each bind ATP; that span reads RL. A 'KMSKS' region motif is present at residues 296–300; sequence ITSKR.

The protein belongs to the class-I aminoacyl-tRNA synthetase family. As to quaternary structure, monomer.

The protein resides in the cytoplasm. The catalysed reaction is tRNA(Gln) + L-glutamine + ATP = L-glutaminyl-tRNA(Gln) + AMP + diphosphate. The protein is Glutamine--tRNA ligase of Cupriavidus metallidurans (strain ATCC 43123 / DSM 2839 / NBRC 102507 / CH34) (Ralstonia metallidurans).